The sequence spans 70 residues: Translational regulator CsrA (70 aa).

This sequence belongs to the CsrA/RsmA family. As to quaternary structure, homodimer; the beta-strands of each monomer intercalate to form a hydrophobic core, while the alpha-helices form wings that extend away from the core.

It localises to the cytoplasm. Functionally, a translational regulator that binds mRNA to regulate translation initiation and/or mRNA stability. Usually binds in the 5'-UTR at or near the Shine-Dalgarno sequence preventing ribosome-binding, thus repressing translation. Its main target seems to be the major flagellin gene, while its function is anatagonized by FliW. The sequence is that of Translational regulator CsrA from Clostridioides difficile (strain 630) (Peptoclostridium difficile).